Reading from the N-terminus, the 625-residue chain is DNA-directed RNA polymerase subunit gamma (625 aa).

Cys-71, Cys-73, Cys-86, and Cys-89 together coordinate Zn(2+). Mg(2+) is bound by residues Asp-467, Asp-469, and Asp-471.

Belongs to the RNA polymerase beta' chain family. RpoC1 subfamily. As to quaternary structure, in cyanobacteria the RNAP catalytic core is composed of 2 alpha, 1 beta, 1 beta', 1 gamma and 1 omega subunit. When a sigma factor is associated with the core the holoenzyme is formed, which can initiate transcription. Mg(2+) serves as cofactor. Requires Zn(2+) as cofactor.

It catalyses the reaction RNA(n) + a ribonucleoside 5'-triphosphate = RNA(n+1) + diphosphate. DNA-dependent RNA polymerase catalyzes the transcription of DNA into RNA using the four ribonucleoside triphosphates as substrates. This is DNA-directed RNA polymerase subunit gamma from Rippkaea orientalis (strain PCC 8801 / RF-1) (Cyanothece sp. (strain PCC 8801)).